The sequence spans 42 residues: Serine protease inhibitor 8 (42 aa).

The protein belongs to the protease inhibitor I3 (leguminous Kunitz-type inhibitor) family. In terms of tissue distribution, cortex of potato tuber.

Functionally, potent inhibitor of animal pancreatic trypsin (serine protease). The protein is Serine protease inhibitor 8 of Solanum tuberosum (Potato).